The chain runs to 190 residues: Small ribosomal subunit protein uS5 (190 aa).

The S5 DRBM domain occupies 22–85 (FVDKLVHINR…ESAKRNLTRV (64 aa)).

It belongs to the universal ribosomal protein uS5 family. In terms of assembly, part of the 30S ribosomal subunit. Contacts proteins S4 and S8.

With S4 and S12 plays an important role in translational accuracy. In terms of biological role, located at the back of the 30S subunit body where it stabilizes the conformation of the head with respect to the body. The protein is Small ribosomal subunit protein uS5 of Rhodopseudomonas palustris (strain BisA53).